The sequence spans 457 residues: MALWGGRFSQAADQRFKQFNDSLRFDYRLAEQDIIGSVAWSKALVTVGVLNADEQQQLEQALSVLLEEVQANPHAILASDAEDIHSWVETKLIDKVGDLGKKLHTGRSRNDQVATDLKLWCKFQITELQTAVQQLQQALVMTAEANQDAVMPGYTHLQRAQPVTFAHWCLAYVEMLSRDESRLQDTLKRLDVSPLGCGALAGTAYAIDREQLAGWLGFASATRNSLDSVSDRDHVLELLSDASIGMVHLSRFAEDLIFFNSGEAAFVDLSDRVTSGSSLMPQKKNPDALELIRGKCGRVQGALTGMMMTLKGLPLAYNKDMQEDKEGLFDALDTWLDCLHMAALVLDGIQVKRPRCKEAAEQGYANATELADYLVAKGVPFREAHHIVGEAVVEAIRQGKALEALALSDLQQFSSVIGDDVYPILALQSCLDKRVAKGGVSPQQVASAIAEAKARLF.

This sequence belongs to the lyase 1 family. Argininosuccinate lyase subfamily.

The protein localises to the cytoplasm. The catalysed reaction is 2-(N(omega)-L-arginino)succinate = fumarate + L-arginine. The protein operates within amino-acid biosynthesis; L-arginine biosynthesis; L-arginine from L-ornithine and carbamoyl phosphate: step 3/3. This chain is Argininosuccinate lyase, found in Yersinia pseudotuberculosis serotype O:3 (strain YPIII).